A 124-amino-acid polypeptide reads, in one-letter code: MTTMITLRRRFAVAVAGVATAAATTVTLAPAPANAADVYGAIAYSGNGSWGRSWDYPTRAAAEATAVKSCGYSDCKVLTSFTACGAVAANDRAYQGGVGPTLAAAMKDALTKLGGGYIDTWACN.

The segment at residues 1-35 (MTTMITLRRRFAVAVAGVATAAATTVTLAPAPANA) is a signal peptide (tat-type signal).

It to M.tuberculosis Rv1813c. In terms of processing, predicted to be exported by the Tat system. The position of the signal peptide cleavage has not been experimentally proven.

This Mycobacterium tuberculosis (strain CDC 1551 / Oshkosh) protein is Protein MT1307.